The primary structure comprises 559 residues: Formate--tetrahydrofolate ligase (559 aa).

Position 68-75 (68-75 (TPAGEGKT)) interacts with ATP.

This sequence belongs to the formate--tetrahydrofolate ligase family.

It carries out the reaction (6S)-5,6,7,8-tetrahydrofolate + formate + ATP = (6R)-10-formyltetrahydrofolate + ADP + phosphate. Its pathway is one-carbon metabolism; tetrahydrofolate interconversion. This Moorella thermoacetica (strain ATCC 39073 / JCM 9320) protein is Formate--tetrahydrofolate ligase.